A 332-amino-acid chain; its full sequence is Agamous-like MADS-box protein AGL66 (332 aa).

The MADS-box domain occupies 1–61 (MGRVKLEIKR…DRLSLFSGKT (61 aa)). The stretch at 120-151 (TAINSDVEELEHEVYKLQQQLLMAEEELRKYE) forms a coiled coil.

In terms of assembly, forms a heterodimer with AGL30. In terms of tissue distribution, expressed in pollen.

It localises to the nucleus. Its function is as follows. Probable transcription factor that forms a heterodimer with the MADS-box protein AGL30 and is involved in the regulation of pollen maturation at the late stages of pollen development and pollen tube growth. The polypeptide is Agamous-like MADS-box protein AGL66 (Arabidopsis thaliana (Mouse-ear cress)).